Reading from the N-terminus, the 327-residue chain is Ribose-phosphate pyrophosphokinase (327 aa).

Residues 40-42 (DGE) and 99-100 (RQ) contribute to the ATP site. Positions 134 and 173 each coordinate Mg(2+). K196 is an active-site residue. Residues R198, D222, and 226-230 (DTANT) each bind D-ribose 5-phosphate.

Belongs to the ribose-phosphate pyrophosphokinase family. Class I subfamily. Homohexamer. Mg(2+) serves as cofactor.

The protein localises to the cytoplasm. The catalysed reaction is D-ribose 5-phosphate + ATP = 5-phospho-alpha-D-ribose 1-diphosphate + AMP + H(+). It participates in metabolic intermediate biosynthesis; 5-phospho-alpha-D-ribose 1-diphosphate biosynthesis; 5-phospho-alpha-D-ribose 1-diphosphate from D-ribose 5-phosphate (route I): step 1/1. Functionally, involved in the biosynthesis of the central metabolite phospho-alpha-D-ribosyl-1-pyrophosphate (PRPP) via the transfer of pyrophosphoryl group from ATP to 1-hydroxyl of ribose-5-phosphate (Rib-5-P). The chain is Ribose-phosphate pyrophosphokinase from Chromobacterium violaceum (strain ATCC 12472 / DSM 30191 / JCM 1249 / CCUG 213 / NBRC 12614 / NCIMB 9131 / NCTC 9757 / MK).